The chain runs to 339 residues: Phenylalanine--tRNA ligase alpha subunit (339 aa).

Position 253 (Glu253) interacts with Mg(2+).

Belongs to the class-II aminoacyl-tRNA synthetase family. Phe-tRNA synthetase alpha subunit type 1 subfamily. In terms of assembly, tetramer of two alpha and two beta subunits. It depends on Mg(2+) as a cofactor.

The protein localises to the cytoplasm. It carries out the reaction tRNA(Phe) + L-phenylalanine + ATP = L-phenylalanyl-tRNA(Phe) + AMP + diphosphate + H(+). In Thioalkalivibrio sulfidiphilus (strain HL-EbGR7), this protein is Phenylalanine--tRNA ligase alpha subunit.